We begin with the raw amino-acid sequence, 259 residues long: Imidazole glycerol phosphate synthase subunit HisF (259 aa).

Residues Asp-11 and Asp-130 contribute to the active site.

Belongs to the HisA/HisF family. In terms of assembly, heterodimer of HisH and HisF.

Its subcellular location is the cytoplasm. The catalysed reaction is 5-[(5-phospho-1-deoxy-D-ribulos-1-ylimino)methylamino]-1-(5-phospho-beta-D-ribosyl)imidazole-4-carboxamide + L-glutamine = D-erythro-1-(imidazol-4-yl)glycerol 3-phosphate + 5-amino-1-(5-phospho-beta-D-ribosyl)imidazole-4-carboxamide + L-glutamate + H(+). Its pathway is amino-acid biosynthesis; L-histidine biosynthesis; L-histidine from 5-phospho-alpha-D-ribose 1-diphosphate: step 5/9. Its function is as follows. IGPS catalyzes the conversion of PRFAR and glutamine to IGP, AICAR and glutamate. The HisF subunit catalyzes the cyclization activity that produces IGP and AICAR from PRFAR using the ammonia provided by the HisH subunit. The chain is Imidazole glycerol phosphate synthase subunit HisF from Oleidesulfovibrio alaskensis (strain ATCC BAA-1058 / DSM 17464 / G20) (Desulfovibrio alaskensis).